The sequence spans 1423 residues: Fructan beta-fructosidase (1423 aa).

The signal sequence occupies residues 1–39 (MEEETVCKNWFMRKSGKSWIFGCAVFFVLGLATALPVAA). The disordered stretch occupies residues 44–161 (QTTAADTAVT…TNLEDMSHDT (118 aa)). The span at 69 to 126 (AVTETTQSEGTASKQLTTPAVADQTTEPTDNEPISSSDGASSPYQVTDTTEPQQTLTP) shows a compositional bias: polar residues. Substrate contacts are provided by residues 455-458 (WAND), Gln474, 513-514 (FS), 581-582 (RD), and Asp783. Asp458 is a catalytic residue. Residues 867–871 (ASVEV) are involved in binding of sugars with beta-(2,6) linkages or binding of molecular weight fructans. The BIG2 domain maps to 924–1002 (PVAMNTTTAK…SKENPSLSKT (79 aa)). The segment covering 1368 to 1385 (DVNSVQQTEPSVMSSSPK) has biased composition (polar residues). The disordered stretch occupies residues 1368-1394 (DVNSVQQTEPSVMSSSPKATLPDTGDH). Residues 1388–1392 (LPDTG) carry the LPXTG sorting signal motif. Thr1391 carries the pentaglycyl murein peptidoglycan amidated threonine modification. Residues 1392–1423 (GDHKTDLSQLGVLAMIGSFLVEIAGYFKKRKD) constitute a propeptide, removed by sortase.

This sequence belongs to the glycosyl hydrolase 32 family.

The protein localises to the secreted. It is found in the cell wall. It carries out the reaction Hydrolysis of terminal, non-reducing (2-&gt;1)- and (2-&gt;6)-linked beta-D-fructofuranose residues in fructans.. Functionally, this protein is a fructanase enzyme which degrades levans and inulins to fructose and also cleaves sucrose into glucose and fructose and can therefore function as an extracellular invertase. In Streptococcus mutans serotype c (strain ATCC 700610 / UA159), this protein is Fructan beta-fructosidase (fruA).